Here is a 215-residue protein sequence, read N- to C-terminus: TLD domain-containing protein 2 (215 aa).

Residues 1–46 (MRGLRWRYTRLPSQVEDTLSGEEGNEEEEEEEAAPDPAAAPEDPTV) are disordered. Acidic residues predominate over residues 19–34 (LSGEEGNEEEEEEEAA). Residues 54–215 (QVLSASEIRQ…IQELEAWLLS (162 aa)) enclose the TLDc domain.

The protein belongs to the OXR1 family.

The chain is TLD domain-containing protein 2 (TLDC2) from Homo sapiens (Human).